The following is a 539-amino-acid chain: Chaperonin GroEL (539 aa).

ATP-binding positions include 29–32 (TLGP), 86–90 (DGTTT), Gly413, 476–478 (NAA), and Asp492.

The protein belongs to the chaperonin (HSP60) family. In terms of assembly, forms a cylinder of 14 subunits composed of two heptameric rings stacked back-to-back. Interacts with the co-chaperonin GroES.

Its subcellular location is the cytoplasm. The catalysed reaction is ATP + H2O + a folded polypeptide = ADP + phosphate + an unfolded polypeptide.. Its function is as follows. Together with its co-chaperonin GroES, plays an essential role in assisting protein folding. The GroEL-GroES system forms a nano-cage that allows encapsulation of the non-native substrate proteins and provides a physical environment optimized to promote and accelerate protein folding. The sequence is that of Chaperonin GroEL from Geobacillus sp. (strain WCH70).